The chain runs to 190 residues: Selenoprotein S (190 aa).

Residues 28 to 48 traverse the membrane as a helical segment; it reads SLLATYGWYIVFCCILLYVVF. Positions 78 to 90 are VCP/p97-interacting motif (VIM); the sequence is RQEALAAARLKMQ. A compositionally biased stretch (basic and acidic residues) spans 115–138; the sequence is KIERWDSVQEGRSYRGDARKRQEE. A disordered region spans residues 115-190; that stretch reads KIERWDSVQE…RRGPSSGGUG (76 aa). Residue Ser140 is modified to Phosphoserine. Positions 160–174 are enriched in gly residues; that stretch reads RGGGYNPLSGEGGGA. Position 189 (Sec189) is a non-standard amino acid, selenocysteine.

It belongs to the selenoprotein S family. In terms of assembly, interacts with DERL1 and (via VIM motif) with VCP, suggesting that it forms a membrane complex with DERL1 that serves as a receptor for VCP. Also interacts with DERL2, DERL3 and SELENOK. The SELENOK-SELENOS complex interacts with VCP. Post-translationally, truncated SELENOS proteins produced by failed UGA/Sec decoding are ubiquitinated by the CRL2(KLHDC2) and CRL2(KLHDC3) complexes, which recognizes the glycine (Gly) at the C-terminus of truncated SELENOS proteins. Truncated SELENOS proteins produced by failed UGA/Sec decoding are also ubiquitinated by the CRL5(KLHDC1) complex. As to expression, ubiquitously expressed. Highest expression in liver and lung, with lower levels detected in spleen, kidney, brain, lymph nodes, small intestine, stomach and heart. Very low expression detected in longissimus dorsi.

It is found in the cytoplasm. It localises to the endoplasmic reticulum membrane. Functionally, involved in the degradation process of misfolded endoplasmic reticulum (ER) luminal proteins. Participates in the transfer of misfolded proteins from the ER to the cytosol, where they are destroyed by the proteasome in a ubiquitin-dependent manner. Probably acts by serving as a linker between DERL1, which mediates the retrotranslocation of misfolded proteins into the cytosol, and the ATPase complex VCP, which mediates the translocation and ubiquitination. The protein is Selenoprotein S of Sus scrofa (Pig).